A 126-amino-acid chain; its full sequence is Holo-[acyl-carrier-protein] synthase (126 aa).

Mg(2+) is bound by residues Asp-9 and Glu-58.

It belongs to the P-Pant transferase superfamily. AcpS family. Requires Mg(2+) as cofactor.

The protein localises to the cytoplasm. The enzyme catalyses apo-[ACP] + CoA = holo-[ACP] + adenosine 3',5'-bisphosphate + H(+). Functionally, transfers the 4'-phosphopantetheine moiety from coenzyme A to a Ser of acyl-carrier-protein. In Shewanella denitrificans (strain OS217 / ATCC BAA-1090 / DSM 15013), this protein is Holo-[acyl-carrier-protein] synthase.